An 86-amino-acid polypeptide reads, in one-letter code: uncharacterized protein (86 aa).

This sequence to C.jejuni CJ0253.

This is an uncharacterized protein from Helicobacter pylori (strain ATCC 700392 / 26695) (Campylobacter pylori).